Here is a 463-residue protein sequence, read N- to C-terminus: Bifunctional protein HldE (463 aa).

The tract at residues 1–315 (MKKILVIGDL…LILNQTHPKI (315 aa)) is ribokinase. 191 to 194 (NRAE) contacts ATP. Residue Asp-260 is part of the active site. The interval 334 to 463 (FTNGCFDILH…IEKIKRTHND (130 aa)) is cytidylyltransferase.

This sequence in the N-terminal section; belongs to the carbohydrate kinase PfkB family. It in the C-terminal section; belongs to the cytidylyltransferase family. Homodimer.

The enzyme catalyses D-glycero-beta-D-manno-heptose 7-phosphate + ATP = D-glycero-beta-D-manno-heptose 1,7-bisphosphate + ADP + H(+). It carries out the reaction D-glycero-beta-D-manno-heptose 1-phosphate + ATP + H(+) = ADP-D-glycero-beta-D-manno-heptose + diphosphate. It functions in the pathway nucleotide-sugar biosynthesis; ADP-L-glycero-beta-D-manno-heptose biosynthesis; ADP-L-glycero-beta-D-manno-heptose from D-glycero-beta-D-manno-heptose 7-phosphate: step 1/4. Its pathway is nucleotide-sugar biosynthesis; ADP-L-glycero-beta-D-manno-heptose biosynthesis; ADP-L-glycero-beta-D-manno-heptose from D-glycero-beta-D-manno-heptose 7-phosphate: step 3/4. It participates in bacterial outer membrane biogenesis; LPS core biosynthesis. In terms of biological role, catalyzes the phosphorylation of D-glycero-D-manno-heptose 7-phosphate at the C-1 position to selectively form D-glycero-beta-D-manno-heptose-1,7-bisphosphate. Functionally, catalyzes the ADP transfer from ATP to D-glycero-beta-D-manno-heptose 1-phosphate, yielding ADP-D-glycero-beta-D-manno-heptose. The sequence is that of Bifunctional protein HldE from Helicobacter pylori (strain J99 / ATCC 700824) (Campylobacter pylori J99).